The primary structure comprises 72 residues: Phycobilisome 37.5 kDa linker polypeptide, phycocyanin-associated, rod (72 aa).

The region spanning Met1–Phe72 is the PBS-linker domain.

It belongs to the phycobilisome linker protein family.

The protein resides in the cellular thylakoid membrane. Its function is as follows. Rod linker protein, associated with phycocyanin. Linker polypeptides determine the state of aggregation and the location of the disk-shaped phycobiliprotein units within the phycobilisome and modulate their spectroscopic properties in order to mediate a directed and optimal energy transfer. The chain is Phycobilisome 37.5 kDa linker polypeptide, phycocyanin-associated, rod (cpcH2) from Pseudanabaena tenuis (strain PCC 7409).